Reading from the N-terminus, the 55-residue chain is UPF0391 membrane protein RALTA_A0099 (55 aa).

Transmembrane regions (helical) follow at residues 5–25 (ALVFFVIALIAAIFGFGGIAA) and 30–50 (IAKILFFIFLVVALVAAVMGL).

It belongs to the UPF0391 family.

The protein localises to the cell membrane. In Cupriavidus taiwanensis (strain DSM 17343 / BCRC 17206 / CCUG 44338 / CIP 107171 / LMG 19424 / R1) (Ralstonia taiwanensis (strain LMG 19424)), this protein is UPF0391 membrane protein RALTA_A0099.